The following is a 278-amino-acid chain: Large ribosomal subunit protein uL2 (278 aa).

A disordered region spans residues 225 to 278; it reads MNPVDHPHGGGEGRTSGGRHPVTPWGKPTKGKKTRANKATDKYIVRSRHQKKKG. The span at 269–278 shows a compositional bias: basic residues; it reads VRSRHQKKKG.

This sequence belongs to the universal ribosomal protein uL2 family. In terms of assembly, part of the 50S ribosomal subunit. Forms a bridge to the 30S subunit in the 70S ribosome.

Functionally, one of the primary rRNA binding proteins. Required for association of the 30S and 50S subunits to form the 70S ribosome, for tRNA binding and peptide bond formation. It has been suggested to have peptidyltransferase activity; this is somewhat controversial. Makes several contacts with the 16S rRNA in the 70S ribosome. This chain is Large ribosomal subunit protein uL2, found in Parvibaculum lavamentivorans (strain DS-1 / DSM 13023 / NCIMB 13966).